Here is an 85-residue protein sequence, read N- to C-terminus: UPF0297 protein LBA0418 (85 aa).

The protein belongs to the UPF0297 family.

This chain is UPF0297 protein LBA0418, found in Lactobacillus acidophilus (strain ATCC 700396 / NCK56 / N2 / NCFM).